Reading from the N-terminus, the 95-residue chain is Protein TusB (95 aa).

The protein belongs to the DsrH/TusB family. As to quaternary structure, heterohexamer, formed by a dimer of trimers. The hexameric TusBCD complex contains 2 copies each of TusB, TusC and TusD. The TusBCD complex interacts with TusE.

The protein localises to the cytoplasm. Part of a sulfur-relay system required for 2-thiolation of 5-methylaminomethyl-2-thiouridine (mnm(5)s(2)U) at tRNA wobble positions. The polypeptide is Protein TusB (Shigella dysenteriae serotype 1 (strain Sd197)).